A 141-amino-acid chain; its full sequence is Large ribosomal subunit protein uL11 (141 aa).

It belongs to the universal ribosomal protein uL11 family. As to quaternary structure, part of the ribosomal stalk of the 50S ribosomal subunit. Interacts with L10 and the large rRNA to form the base of the stalk. L10 forms an elongated spine to which L12 dimers bind in a sequential fashion forming a multimeric L10(L12)X complex. One or more lysine residues are methylated.

Functionally, forms part of the ribosomal stalk which helps the ribosome interact with GTP-bound translation factors. The protein is Large ribosomal subunit protein uL11 of Prochlorococcus marinus (strain MIT 9312).